The following is an 89-amino-acid chain: RNA-binding protein Hfq (89 aa).

Residues 9-68 form the Sm domain; the sequence is DPFLNALRRERVPVSIYLVNGIKLQGQVESFDQFVILLKNTVSQMVYKHAISTVVPARAL.

Belongs to the Hfq family. As to quaternary structure, homohexamer.

RNA chaperone that binds small regulatory RNA (sRNAs) and mRNAs to facilitate mRNA translational regulation in response to envelope stress, environmental stress and changes in metabolite concentrations. Also binds with high specificity to tRNAs. The polypeptide is RNA-binding protein Hfq (Shewanella denitrificans (strain OS217 / ATCC BAA-1090 / DSM 15013)).